The chain runs to 178 residues: Interleukin-10 (178 aa).

The N-terminal stretch at 1–18 (MHSSALLCCLVLLTGVRA) is a signal peptide. Intrachain disulfides connect C30–C126 and C80–C132. An N-linked (GlcNAc...) asparagine glycan is attached at N134.

The protein belongs to the IL-10 family. As to quaternary structure, homodimer. Interacts with IL10RA and IL10RB.

The protein localises to the secreted. Functionally, major immune regulatory cytokine that acts on many cells of the immune system where it has profound anti-inflammatory functions, limiting excessive tissue disruption caused by inflammation. Mechanistically, IL10 binds to its heterotetrameric receptor comprising IL10RA and IL10RB leading to JAK1 and STAT2-mediated phosphorylation of STAT3. In turn, STAT3 translocates to the nucleus where it drives expression of anti-inflammatory mediators. Targets antigen-presenting cells (APCs) such as macrophages and monocytes and inhibits their release of pro-inflammatory cytokines including granulocyte-macrophage colony-stimulating factor /GM-CSF, granulocyte colony-stimulating factor/G-CSF, IL-1 alpha, IL-1 beta, IL-6, IL-8 and TNF-alpha. Also interferes with antigen presentation by reducing the expression of MHC-class II and co-stimulatory molecules, thereby inhibiting their ability to induce T cell activation. In addition, controls the inflammatory response of macrophages by reprogramming essential metabolic pathways including mTOR signaling. The polypeptide is Interleukin-10 (IL10) (Macaca nemestrina (Pig-tailed macaque)).